Here is a 615-residue protein sequence, read N- to C-terminus: Probable inactive purple acid phosphatase 24 (615 aa).

Positions 1–26 are cleaved as a signal peptide; it reads MARVLGVLLCLLALFSSSLCLDHANG. Asparagine 129, asparagine 267, and asparagine 275 each carry an N-linked (GlcNAc...) asparagine glycan. Residue aspartate 297 participates in Fe cation binding. Asparagine 318 is a glycosylation site (N-linked (GlcNAc...) asparagine). Fe cation contacts are provided by aspartate 338 and tyrosine 341. Residue aspartate 338 participates in Zn(2+) binding. Zn(2+)-binding residues include asparagine 371, histidine 460, and histidine 502. Asparagine 371 contributes to the substrate binding site. 502 to 504 is a substrate binding site; sequence HVH. Histidine 504 contributes to the Fe cation binding site. N-linked (GlcNAc...) asparagine glycosylation is present at asparagine 592.

It belongs to the metallophosphoesterase superfamily. Purple acid phosphatase family. In terms of assembly, homodimer. Fe cation serves as cofactor. It depends on Zn(2+) as a cofactor. In terms of tissue distribution, specifically expressed in flowers.

The protein localises to the secreted. This Arabidopsis thaliana (Mouse-ear cress) protein is Probable inactive purple acid phosphatase 24 (PAP24).